The primary structure comprises 266 residues: Thymidylate synthase (266 aa).

Residues arginine 20 and 129 to 130 contribute to the dUMP site; that span reads RR. Cysteine 149 serves as the catalytic Nucleophile. Residues 169-172, asparagine 180, and 210-212 each bind dUMP; these read RSCD and HVY. Residue aspartate 172 coordinates (6R)-5,10-methylene-5,6,7,8-tetrahydrofolate. Alanine 265 contacts (6R)-5,10-methylene-5,6,7,8-tetrahydrofolate.

Belongs to the thymidylate synthase family. Bacterial-type ThyA subfamily. As to quaternary structure, homodimer.

It is found in the cytoplasm. It catalyses the reaction dUMP + (6R)-5,10-methylene-5,6,7,8-tetrahydrofolate = 7,8-dihydrofolate + dTMP. It participates in pyrimidine metabolism; dTTP biosynthesis. Catalyzes the reductive methylation of 2'-deoxyuridine-5'-monophosphate (dUMP) to 2'-deoxythymidine-5'-monophosphate (dTMP) while utilizing 5,10-methylenetetrahydrofolate (mTHF) as the methyl donor and reductant in the reaction, yielding dihydrofolate (DHF) as a by-product. This enzymatic reaction provides an intracellular de novo source of dTMP, an essential precursor for DNA biosynthesis. The sequence is that of Thymidylate synthase from Bifidobacterium longum (strain NCC 2705).